A 346-amino-acid chain; its full sequence is tRNA N6-adenosine threonylcarbamoyltransferase (346 aa).

Residues H117, H121, and Y138 each contribute to the a divalent metal cation site. Residues Y138–G142, D170, G185, and N277 contribute to the substrate site. D305 lines the a divalent metal cation pocket.

Belongs to the KAE1 / TsaD family. As to quaternary structure, component of the EKC/KEOPS complex composed of at least SPAP27G11.07c/BUD32, cgi121, gon7, pgp2 and SPAC4H3.13/PCC1; the whole complex dimerizes. Requires a divalent metal cation as cofactor.

It localises to the cytoplasm. The protein localises to the nucleus. It carries out the reaction L-threonylcarbamoyladenylate + adenosine(37) in tRNA = N(6)-L-threonylcarbamoyladenosine(37) in tRNA + AMP + H(+). Functionally, component of the EKC/KEOPS complex that is required for the formation of a threonylcarbamoyl group on adenosine at position 37 (t(6)A37) in tRNAs that read codons beginning with adenine. The complex is probably involved in the transfer of the threonylcarbamoyl moiety of threonylcarbamoyl-AMP (TC-AMP) to the N6 group of A37. Pgp2 likely plays a direct catalytic role in this reaction, but requires other protein(s) of the complex to fulfill this activity. The EKC/KEOPS complex also promotes both telomere uncapping and telomere elongation. The complex is required for efficient recruitment of transcriptional coactivators. This is tRNA N6-adenosine threonylcarbamoyltransferase (pgp2) from Schizosaccharomyces pombe (strain 972 / ATCC 24843) (Fission yeast).